We begin with the raw amino-acid sequence, 144 residues long: Transcriptional regulator SlyA (144 aa).

Positions 2 to 135 (ESPLGSDLAR…LITLIAKLEH (134 aa)) constitute an HTH marR-type domain. Positions 49 to 72 (QIQLAKAIGIEQPSLVRTLDQLEE) form a DNA-binding region, H-T-H motif.

Belongs to the SlyA family. Homodimer.

Functionally, transcription regulator that can specifically activate or repress expression of target genes. The polypeptide is Transcriptional regulator SlyA (Shigella boydii serotype 18 (strain CDC 3083-94 / BS512)).